The following is a 223-amino-acid chain: Ras-related protein Rab-32 (223 aa).

N-acetylalanine is present on alanine 2. GTP contacts are provided by valine 34, glycine 35, lysine 36, threonine 37, serine 38, serine 49, glutamine 50, tyrosine 52, and threonine 55. Threonine 37 is a binding site for Mg(2+). The short motif at 46 to 60 is the Switch 1 element; it reads QLFSQHYRATIGVDF. Position 55 (threonine 55) interacts with Mg(2+). Serine 69 is modified (phosphoserine). Aspartate 79 is a Mg(2+) binding site. Residues glycine 82, asparagine 141, lysine 142, aspartate 144, alanine 173, and lysine 174 each coordinate GTP. Residues 82–95 carry the Switch 2 motif; that stretch reads GQERFGNMTRVYYK. Residues 176–195 are PKA-RII subunit binding domain; the sequence is NINIDEATRFLVENMLANQQ. Residues cysteine 222 and cysteine 223 are each lipidated (S-geranylgeranyl cysteine).

This sequence belongs to the small GTPase superfamily. Rab family. Interacts with ANKRD27. A decreased interaction with ANKRD27 seen in the presence of SGSM2. Interacts with LRRK2 (via N-terminus); this interaction results in stimulation of RAB10 phosphorylation by LRRK2. Mg(2+) is required as a cofactor. In terms of tissue distribution, widely expressed with highest levels in liver. Strong expression also found in melanocyte, platelet, mast cell and fibroblast cell lines.

It is found in the mitochondrion. Its subcellular location is the mitochondrion outer membrane. The protein localises to the cytoplasmic vesicle. It localises to the phagosome. The protein resides in the phagosome membrane. It is found in the melanosome. Its subcellular location is the melanosome membrane. It catalyses the reaction GTP + H2O = GDP + phosphate + H(+). Regulated by guanine the nucleotide exchange factor (GEF) BLOC-3 complex composed of HPS1 and HPS4 which promote the exchange of bound GDP for free GTP. Regulated by the GTPase activating protein (GAP) SGSM2/RUTBC1 which increases the GTP hydrolysis activity. Inhibited by GDP dissociation inhibitors (GDIs) which prevent Rab-GDP dissociation. Its function is as follows. The small GTPases Rab are key regulators of intracellular membrane trafficking, from the formation of transport vesicles to their fusion with membranes. Rabs cycle between an inactive GDP-bound form and an active GTP-bound form that is able to recruit to membranes different set of downstream effectors directly responsible for vesicle formation, movement, tethering and fusion. Also acts as an A-kinase anchoring protein by binding to the type II regulatory subunit of protein kinase A and anchoring it to the mitochondrion. Also involved in synchronization of mitochondrial fission. Plays a role in the maturation of phagosomes that engulf pathogens, such as S.aureus and M.tuberculosis. Plays an important role in the control of melanin production and melanosome biogenesis. In concert with RAB38, regulates the proper trafficking of melanogenic enzymes TYR, TYRP1 and DCT/TYRP2 to melanosomes in melanocytes. Stimulates phosphorylation of RAB10 'Thr-73' by LRRK2. The sequence is that of Ras-related protein Rab-32 from Mus musculus (Mouse).